A 423-amino-acid polypeptide reads, in one-letter code: G-protein coupled receptor 83 (423 aa).

An N-terminal signal peptide occupies residues 1-17 (MKVPPVLLLFLLSSVRA). Topologically, residues 18–71 (TEQPQVVTEHPSMEAALTGPNASSHFWANYTFSDWQNFVGRRRYGAESQNPTVK) are extracellular. 2 N-linked (GlcNAc...) asparagine glycosylation sites follow: Asn38 and Asn46. Residues 72 to 92 (ALLIVAYSFTIVFSLFGNVLV) form a helical membrane-spanning segment. The Cytoplasmic segment spans residues 93 to 107 (CHVIFKNQRMHSATS). The helical transmembrane segment at 108 to 129 (LFIVNLAVADIMITLLNTPFTL) threads the bilayer. Residues 130–145 (VRFVNSTWVFGKGMCH) lie on the Extracellular side of the membrane. A glycan (N-linked (GlcNAc...) asparagine) is linked at Asn134. Residues Cys144 and Cys224 are joined by a disulfide bond. Residues 146-167 (VSRFAQYCSLHVSALTLTAIAV) traverse the membrane as a helical segment. Residues 168–186 (DRHQVIMHPLKPRISITKG) are Cytoplasmic-facing. The helical transmembrane segment at 187–208 (VIYIAVIWVMATFFSLPHAICQ) threads the bilayer. Over 209–238 (KLFTFKYSEDIVRSLCLPDFPEPADLFWKY) the chain is Extracellular. A helical membrane pass occupies residues 239-260 (LDLATFILLYLLPLFIISVAYA). Over 261–293 (RVAKKLWLCNTIGDVTTEQYLALRRKKKTTVKM) the chain is Cytoplasmic. Residues 294–315 (LVLVVVLFALCWFPLNCYVLLL) traverse the membrane as a helical segment. Residues 316–327 (SSKAIHTNNALY) are Extracellular-facing. A helical transmembrane segment spans residues 328-348 (FAFHWFAMSSTCYNPFIYCWL). Over 349–423 (NENFRVELKA…SSVEPVVAMS (75 aa)) the chain is Cytoplasmic. Positions 389–423 (SHGRRAPLPNHHLPSSQIQSGKTDLSSVEPVVAMS) are disordered. The segment covering 401-414 (LPSSQIQSGKTDLS) has biased composition (polar residues).

This sequence belongs to the G-protein coupled receptor 1 family. Predominantly expressed in the brain, with moderate expression in the hypothalamus. Expressed in the thymus.

The protein resides in the cell membrane. G-protein coupled receptor for PEN, a neuropeptide produced from the precursor protein, proSAAS (encoded by PCSK1N). Acts through a G(i)- and G(q)-alpha-alpha-mediated pathway in response to PEN. Plays a role in food intake and body weight regulation. May contribute to the regulation of anxiety-related behaviors. This Mus musculus (Mouse) protein is G-protein coupled receptor 83.